The chain runs to 173 residues: RNA pyrophosphohydrolase (173 aa).

Residues 6-149 enclose the Nudix hydrolase domain; sequence GYRPNVGIIL…KRHVYRRALR (144 aa). The short motif at 38–59 is the Nudix box element; sequence GGIRRDESPLDAMYRELAEETG.

It belongs to the Nudix hydrolase family. RppH subfamily. Requires a divalent metal cation as cofactor.

Its function is as follows. Accelerates the degradation of transcripts by removing pyrophosphate from the 5'-end of triphosphorylated RNA, leading to a more labile monophosphorylated state that can stimulate subsequent ribonuclease cleavage. The polypeptide is RNA pyrophosphohydrolase (Thioalkalivibrio sulfidiphilus (strain HL-EbGR7)).